The following is a 122-amino-acid chain: Large-conductance mechanosensitive channel (122 aa).

2 helical membrane passes run 14-34 (VLDL…VKSL) and 67-87 (GAFL…FILI).

The protein belongs to the MscL family. As to quaternary structure, homopentamer.

Its subcellular location is the cell membrane. Functionally, channel that opens in response to stretch forces in the membrane lipid bilayer. May participate in the regulation of osmotic pressure changes within the cell. In Lactococcus lactis subsp. lactis (strain IL1403) (Streptococcus lactis), this protein is Large-conductance mechanosensitive channel.